The sequence spans 478 residues: ATP-dependent RNA helicase DDX19A (478 aa).

Ala-2 bears the N-acetylalanine mark. Positions 2 to 299 (ATDSWALAVD…DPNVIKLKRE (298 aa)) are N-terminal lobe. Lys-26 is covalently cross-linked (Glycyl lysine isopeptide (Lys-Gly) (interchain with G-Cter in SUMO1); alternate). Residue Lys-26 forms a Glycyl lysine isopeptide (Lys-Gly) (interchain with G-Cter in SUMO2); alternate linkage. Thr-42 is modified (phosphothreonine). The N-terminal helix stretch occupies residues 54–67 (DRAAQSLLNKLIRS). The short motif at 91 to 119 (KSFEELRLKPQLLQGVYAMGFNRPSKIQE) is the Q motif element. ATP is bound by residues Gln-118 and 137 to 144 (SQSGTGKT). One can recognise a Helicase ATP-binding domain in the interval 124 to 294 (MMLAEPPQNL…QKVVPDPNVI (171 aa)). The DEAD box signature appears at 241 to 244 (DEAD). The segment at 300 to 478 (EETLDTIKQY…DLDEIEKIAN (179 aa)) is C-terminal lobe. Residues 305–473 (TIKQYYVLCS…RLDTDDLDEI (169 aa)) enclose the Helicase C-terminal domain. The ATP site is built by Arg-428 and Arg-431.

Belongs to the DEAD box helicase family. DDX19/DBP5 subfamily.

The protein localises to the cytoplasm. The protein resides in the nucleus. Its subcellular location is the nucleoplasm. The catalysed reaction is ATP + H2O = ADP + phosphate + H(+). Its function is as follows. ATP-dependent RNA helicase involved in mRNA export from the nucleus. Rather than unwinding RNA duplexes, DDX19 functions as a remodeler of ribonucleoprotein particles, whereby proteins bound to nuclear mRNA are dissociated and replaced by cytoplasmic mRNA binding proteins. This Homo sapiens (Human) protein is ATP-dependent RNA helicase DDX19A (DDX19A).